We begin with the raw amino-acid sequence, 148 residues long: 3-dehydroquinate dehydratase (148 aa).

Substrate contacts are provided by asparagine 74, histidine 80, and aspartate 87. Histidine 100 acts as the Proton donor in catalysis. Substrate-binding positions include 101–102 and arginine 111; that span reads LS.

The protein belongs to the type-II 3-dehydroquinase family. In terms of assembly, homododecamer.

It carries out the reaction 3-dehydroquinate = 3-dehydroshikimate + H2O. Its pathway is metabolic intermediate biosynthesis; chorismate biosynthesis; chorismate from D-erythrose 4-phosphate and phosphoenolpyruvate: step 3/7. This Bacillus subtilis (strain 168) protein is 3-dehydroquinate dehydratase (yqhS).